The chain runs to 61 residues: Large ribosomal subunit protein bL28 (61 aa).

Residues 1–26 (MAKDFVTGRKTTFGKKRSHALNQTNR) form a disordered region.

It belongs to the bacterial ribosomal protein bL28 family.

The chain is Large ribosomal subunit protein bL28 from Ligilactobacillus salivarius (strain UCC118) (Lactobacillus salivarius).